Consider the following 424-residue polypeptide: Glutamyl-tRNA(Gln) amidotransferase subunit D (424 aa).

Residues 58–79 form a disordered region; sequence NTNGGLNGGKEHKTAGEEVQKS. A compositionally biased stretch (basic and acidic residues) spans 66-78; sequence GKEHKTAGEEVQK. The 323-residue stretch at 84–406 folds into the Asparaginase/glutaminase domain; it reads PKVAILSTGG…LGQTDEFNEA (323 aa). Residues threonine 94, threonine 170, aspartate 171, and lysine 247 contribute to the active site.

This sequence belongs to the asparaginase 1 family. GatD subfamily. In terms of assembly, heterodimer of GatD and GatE.

The enzyme catalyses L-glutamyl-tRNA(Gln) + L-glutamine + ATP + H2O = L-glutaminyl-tRNA(Gln) + L-glutamate + ADP + phosphate + H(+). Its function is as follows. Allows the formation of correctly charged Gln-tRNA(Gln) through the transamidation of misacylated Glu-tRNA(Gln) in organisms which lack glutaminyl-tRNA synthetase. The reaction takes place in the presence of glutamine and ATP through an activated gamma-phospho-Glu-tRNA(Gln). The GatDE system is specific for glutamate and does not act on aspartate. The sequence is that of Glutamyl-tRNA(Gln) amidotransferase subunit D from Methanosarcina barkeri (strain Fusaro / DSM 804).